A 24-amino-acid polypeptide reads, in one-letter code: Coenzyme PQQ synthesis protein A (24 aa).

Positions 16–20 (EITMY) form a cross-link, pyrroloquinoline quinone (Glu-Tyr).

Belongs to the PqqA family.

The protein operates within cofactor biosynthesis; pyrroloquinoline quinone biosynthesis. In terms of biological role, required for coenzyme pyrroloquinoline quinone (PQQ) biosynthesis. PQQ is probably formed by cross-linking a specific glutamate to a specific tyrosine residue and excising these residues from the peptide. The chain is Coenzyme PQQ synthesis protein A from Cupriavidus taiwanensis (strain DSM 17343 / BCRC 17206 / CCUG 44338 / CIP 107171 / LMG 19424 / R1) (Ralstonia taiwanensis (strain LMG 19424)).